We begin with the raw amino-acid sequence, 427 residues long: Diaminobutyrate--2-oxoglutarate transaminase (427 aa).

An N6-(pyridoxal phosphate)lysine modification is found at lysine 269.

Belongs to the class-III pyridoxal-phosphate-dependent aminotransferase family. The cofactor is pyridoxal 5'-phosphate.

The enzyme catalyses L-2,4-diaminobutanoate + 2-oxoglutarate = L-aspartate 4-semialdehyde + L-glutamate. It functions in the pathway amine and polyamine biosynthesis; ectoine biosynthesis; L-ectoine from L-aspartate 4-semialdehyde: step 1/3. Functionally, catalyzes reversively the conversion of L-aspartate beta-semialdehyde (ASA) to L-2,4-diaminobutyrate (DABA) by transamination with L-glutamate. This Marinococcus halophilus protein is Diaminobutyrate--2-oxoglutarate transaminase (ectB).